The sequence spans 320 residues: Methionyl-tRNA formyltransferase (320 aa).

Residue S114 to P117 participates in (6S)-5,6,7,8-tetrahydrofolate binding.

It belongs to the Fmt family.

The enzyme catalyses L-methionyl-tRNA(fMet) + (6R)-10-formyltetrahydrofolate = N-formyl-L-methionyl-tRNA(fMet) + (6S)-5,6,7,8-tetrahydrofolate + H(+). Attaches a formyl group to the free amino group of methionyl-tRNA(fMet). The formyl group appears to play a dual role in the initiator identity of N-formylmethionyl-tRNA by promoting its recognition by IF2 and preventing the misappropriation of this tRNA by the elongation apparatus. This is Methionyl-tRNA formyltransferase from Acinetobacter baumannii (strain ACICU).